Reading from the N-terminus, the 262-residue chain is High-affinity zinc uptake system membrane protein ZnuB (262 aa).

Transmembrane regions (helical) follow at residues Gly8–Trp28, Ile54–Leu74, Thr84–Ile104, Ile129–Ile149, Phe179–Ile199, Val215–Phe235, and Thr238–Ile254.

This sequence belongs to the ABC-3 integral membrane protein family.

The protein resides in the cell membrane. Functionally, involved in the high-affinity zinc uptake transport system. This chain is High-affinity zinc uptake system membrane protein ZnuB (znuB), found in Buchnera aphidicola subsp. Acyrthosiphon pisum (strain APS) (Acyrthosiphon pisum symbiotic bacterium).